An 827-amino-acid polypeptide reads, in one-letter code: Periplasmic nitrate reductase (827 aa).

The segment at residues 1-33 (MNLSRRDFMKANAAMAAATAAGLTIPVKNVVAA) is a signal peptide (tat-type signal). Positions 37 to 93 (IKWDKGVCRFCGTGCAVLVGTKDGRVVASQGDPDAEVNRGLNCIKGYFLPKIMYGKD) constitute a 4Fe-4S Mo/W bis-MGD-type domain. The [4Fe-4S] cluster site is built by Cys-44, Cys-47, Cys-51, and Cys-79. Residues Lys-81, Gln-148, Asn-173, Cys-177, 210–217 (WGSNMAEM), 241–245 (STYEH), 260–262 (QTD), Met-370, Gln-374, Asn-480, 506–507 (SD), Lys-529, Asp-556, and 716–725 (TGRVLEHWHT) each bind Mo-bis(molybdopterin guanine dinucleotide). Phe-792 contacts substrate. The Mo-bis(molybdopterin guanine dinucleotide) site is built by Asn-800 and Lys-817.

The protein belongs to the prokaryotic molybdopterin-containing oxidoreductase family. NasA/NapA/NarB subfamily. As to quaternary structure, component of the periplasmic nitrate reductase NapAB complex composed of NapA and NapB. It depends on [4Fe-4S] cluster as a cofactor. Mo-bis(molybdopterin guanine dinucleotide) serves as cofactor. Post-translationally, predicted to be exported by the Tat system. The position of the signal peptide cleavage has not been experimentally proven.

The protein localises to the periplasm. It catalyses the reaction 2 Fe(II)-[cytochrome] + nitrate + 2 H(+) = 2 Fe(III)-[cytochrome] + nitrite + H2O. Its function is as follows. Catalytic subunit of the periplasmic nitrate reductase complex NapAB. Receives electrons from NapB and catalyzes the reduction of nitrate to nitrite. This is Periplasmic nitrate reductase from Haemophilus influenzae (strain PittEE).